Consider the following 61-residue polypeptide: DNA gyrase inhibitor YacG (61 aa).

Zn(2+) contacts are provided by C14, C17, C29, and C33.

It belongs to the DNA gyrase inhibitor YacG family. As to quaternary structure, interacts with GyrB. It depends on Zn(2+) as a cofactor.

Its function is as follows. Inhibits all the catalytic activities of DNA gyrase by preventing its interaction with DNA. Acts by binding directly to the C-terminal domain of GyrB, which probably disrupts DNA binding by the gyrase. The chain is DNA gyrase inhibitor YacG from Zymomonas mobilis subsp. mobilis (strain ATCC 31821 / ZM4 / CP4).